The primary structure comprises 186 residues: Enhancer of split m7 protein (186 aa).

A bHLH domain is found at 13-68 (YRKVMKPLLERKRRARINKCLDELKDLMAECVAQTGDAKFEKADILEVTVQHLRKL). One can recognise an Orange domain in the interval 83-116 (FRAGYIRAANEVSRALASLPRVDVAFGTTLMTHL). The WRPW motif signature appears at 183 to 186 (WRPW).

Transcription repression requires formation of a complex with a corepressor protein (Groucho). Forms homodimers.

The protein resides in the nucleus. Its function is as follows. Participates in the control of cell fate choice by uncommitted neuroectodermal cells in the embryo. Transcriptional repressor. Binds DNA on N-box motifs: 5'-CACNAG-3'. This is Enhancer of split m7 protein from Drosophila melanogaster (Fruit fly).